The sequence spans 349 residues: Isopentenyl-diphosphate delta-isomerase (349 aa).

Substrate is bound at residue 9–10 (RK). Residues 65-67 (AMT), Ser-95, and Asn-124 contribute to the FMN site. Residue 95–97 (STH) participates in substrate binding. Position 154 (Gln-154) interacts with substrate. Glu-155 contributes to the Mg(2+) binding site. FMN contacts are provided by residues Lys-186, Ser-211, Thr-216, 262 to 264 (GVR), and 283 to 284 (SR).

This sequence belongs to the IPP isomerase type 2 family. In terms of assembly, homooctamer. Dimer of tetramers. FMN is required as a cofactor. The cofactor is NADPH. It depends on Mg(2+) as a cofactor.

Its subcellular location is the cytoplasm. It carries out the reaction isopentenyl diphosphate = dimethylallyl diphosphate. Functionally, involved in the biosynthesis of isoprenoids. Catalyzes the 1,3-allylic rearrangement of the homoallylic substrate isopentenyl (IPP) to its allylic isomer, dimethylallyl diphosphate (DMAPP). This is Isopentenyl-diphosphate delta-isomerase from Staphylococcus haemolyticus (strain JCSC1435).